The primary structure comprises 116 residues: Integration host factor subunit alpha (116 aa).

Disordered stretches follow at residues 58–80 (FGNF…GETI) and 94–116 (QKLK…EAAE). Residues 94-105 (QKLKSTVEQSGN) show a composition bias toward polar residues.

This sequence belongs to the bacterial histone-like protein family. As to quaternary structure, heterodimer of an alpha and a beta chain.

In terms of biological role, this protein is one of the two subunits of integration host factor, a specific DNA-binding protein that functions in genetic recombination as well as in transcriptional and translational control. The sequence is that of Integration host factor subunit alpha from Bordetella avium (strain 197N).